The sequence spans 26 residues: Metallothionein (26 aa).

The segment covering 1–14 (MGDCGCSGASSCNC) has biased composition (low complexity). The interval 1 to 26 (MGDCGCSGASSCNCGSGCSCSNCGSK) is disordered. C4, C6, C12, C14, C18, C20, and C23 together coordinate Cu(+). Over residues 15 to 26 (GSGCSCSNCGSK) the composition is skewed to cys residues.

This sequence belongs to the metallothionein superfamily. Type 8 family.

This Neurospora crassa (strain ATCC 24698 / 74-OR23-1A / CBS 708.71 / DSM 1257 / FGSC 987) protein is Metallothionein (cmt).